A 77-amino-acid chain; its full sequence is Small ribosomal subunit protein bS18 (77 aa).

The protein belongs to the bacterial ribosomal protein bS18 family. In terms of assembly, part of the 30S ribosomal subunit. Forms a tight heterodimer with protein bS6.

Functionally, binds as a heterodimer with protein bS6 to the central domain of the 16S rRNA, where it helps stabilize the platform of the 30S subunit. This chain is Small ribosomal subunit protein bS18, found in Halalkalibacterium halodurans (strain ATCC BAA-125 / DSM 18197 / FERM 7344 / JCM 9153 / C-125) (Bacillus halodurans).